A 90-amino-acid chain; its full sequence is uncharacterized protein (90 aa).

The tract at residues 13-34 is disordered; the sequence is APEGMGPHHAASSSHHSAQHHH. A helical membrane pass occupies residues 52-72; that stretch reads YKMWFLYALILALIFGVFMWW.

The protein localises to the host membrane. This is an uncharacterized protein from Invertebrate iridescent virus 3 (IIV-3).